The following is a 501-amino-acid chain: TNF receptor-associated factor 2 (501 aa).

Alanine 2 carries the post-translational modification N-acetylalanine. Position 5 is a phosphoserine (serine 5). Threonine 7 is subject to Phosphothreonine. At serine 11 the chain carries Phosphoserine. Residue threonine 22 is modified to Phosphothreonine. Residue lysine 31 forms a Glycyl lysine isopeptide (Lys-Gly) (interchain with G-Cter in ubiquitin) linkage. The RING-type zinc-finger motif lies at 34-73 (CSACRNVLRRPFQAQCGHRYCSFCLASILSSGPQNCAACV). Threonine 117 bears the Phosphothreonine; by PKC mark. TRAF-type zinc fingers lie at residues 124 to 180 (CHEG…AHHE) and 177 to 233 (AHHE…EKQQ). The interval 283–293 (ENIVCVLNREV) is important for interaction with BIRC2 and BIRC3. Residues 299 to 348 (TAEACSRQHRLDQDKIEALSSKVQQLERSIGLKDLAMADLEQKVLEMEAS) adopt a coiled-coil conformation. Lysine 320 is covalently cross-linked (Glycyl lysine isopeptide (Lys-Gly) (interchain with G-Cter in ubiquitin)). The MATH domain occupies 351 to 496 (DGVFIWKISD…DDAIFIKAIV (146 aa)).

Belongs to the TNF receptor-associated factor family. A subfamily. As to quaternary structure, homotrimer. Heterotrimer with TRAF1. Heterotrimer with TRAF3 (via TRAF domain). The domain containing the RING-type and the first TRAF-type zinc finger can also form homodimers (in vitro). Interacts with TNFRSF1B/TNFR2. Interacts with TNFRSF5/CD40. Interacts with TNFRSF4, TNFRSF7/CD27, TNFRSF8/CD30, TNFRSF9/CD137, TNFRSF11A/RANK, TNFRSF13B/TACI, TNFRSF14, TNFRSF16/NGFR, TNFRSF17/BCMA, TNFRSF18/AITR, TNFRSF19/TROY, TNFRSF19L/RELT and EDAR. Stimulation of TNF-alpha receptor TNFRSF1A leads to the formation of two distinct signaling complexes. Plasma membrane-bound complex I is composed of TNFRSF1A, TRADD, RIPK1, TRAF2 and BIRC2/c-IAP1 or BIRC3 which interacts with CHUCK/IKK-alpha, IKBKB/IKK-beta and IKBKG/IKK-gamma promoting cell survival. Subsequently, TRADD, RIPK1 and TRAF2 dissociate from TNFRSF1A and form cytoplasmic complex II with FADD and caspase CASP8 promoting cell apoptosis. Interacts with TRADD. Identified in a complex with TNFRSF1A, RIPK1 and IKBKB/IKK-beta. Interacts with RIPK2. Interacts with BIRC2 and BIRC3 N-terminus; a single BIRC2 or BIRC3 molecule interacts with a heterotrimer formed by TRAF1 and TRAF2, or a TRAF2 homotrimer. Identified in a complex composed of TRAF2, TRAF3, BIRC2 and BIRC3. Interacts with BIRC2; the interaction promotes BIRC2 stability. Interaction with BIRC2 and/or BIRC3 is essential for ubiquitination of IKBKE, degradation of NFKBIA and activation of NF-kappa-B. Within complex I, phosphorylated TRAF2 interacts (via 'Lys-63'-linked polyubiquitin chains) with CHUCK/IKK-alpha, IKBKB/IKK-beta, IKBKG/IKK-gamma TAB2, TAB3 and TAK1 in response to TNF-alpha stimulation. Within complex I, interacts with UXT isoform 1 (via TPQE motif); the interaction prevents the recruitment of FADD and CASP8/caspase 8 to complex I. Forms a complex composed of TNFRSF8/CD30 or TNFRSF1B/TNFR2, and TRAF1, TRAF2 and E3 ligase TRAIP. Within the complex, interacts with TRAIP; the interaction inhibits TRAF2-mediated NF-kappa B activation. Component of a complex composed of TANK and TBK1. Interacts with TRPC4AP. Interacts with MAP3K1/MEKK1, MAP3K5/ASK1 and MAP3K11/MLK3 in response to TNF-alpha stimulation; the interaction leads to JNK activation and interaction with MAP3K5 is inhibited by PRMT1. Component of a complex composed of MAP3K14/NIK BIRC3 and TRAF3; the interaction leads to BIRC2/3-mediated ubiquitination of TRAF3 upon CD40 engagement in a TRAF2-dependent manner. Interacts with MAP3K14/NIK in response to TNF-alpha stimulation; the interaction leads to NF-kappa B activation. Interacts with PEG3; the interaction may promote TRAF2-mediated NF-kappa B activation. Interacts with HIVEP3; the interaction may inhibit TNF-alpha-TRAF2-mediated NF-kappa B and JNK activation. Interacts with TANK/ITRAF; the interaction prevents interaction between TNFRSF1B/TNFR2 and TRAF2. Interacts with deubiquitinating enzyme CYLD; the interaction results in the deubiquitination and inactivation of TRAF2. Interacts with SIAH2; the interaction leads to TRAF2 ubiquitination and degradation. Interacts with E2 conjugating enzyme UBE2N/Ubc13, E3 ligase ITCH and RNF11 in response to TNF-alpha stimulation. Interacts with ubiquitin-editing enzyme TNFAIP3/A20 in response to TNF-alpha stimulation; the interaction promotes TRAF2 dissociation from UBE2N/Ubc13, ITCH, RNF11 and TAX1BP1 and prevents prolonged TRAF-2 ubiquitination. Interacts with TAX1BP1 in response to TNF-alpha stimulation; the interaction promotes TRAF2 dissociation from UBE2N/Ubc13 and TNFAIP3/A20, and prevents prolonged TRAF-2 ubiquitination. Interacts (via C-terminus) with EIF2AK2/PKR (via the kinase catalytic domain). Interacts with deubiquitinating enzyme USP48. Interacts with PTPN2; probably involved in TNF-mediated signaling. Interacts with Toll-like receptor TLR4/3 adapter TICAM1/TRIF; the interaction may promote TICAM1 ubiquitination. Interacts with kinase/endoribonuclease ERN1/IRE1 and DAB2IP in response to ER stress; the interaction requires DAB2IP. Interacts with ERN1/IRE1 and TAOK3 in response to ER stress; the interaction may promote TRAF2 phosphorylation. Interacts (via zinc fingers) with DAB2IP (via C-terminus PER domain)in response to TNF-alpha stimulation. Interacts with CASP8AP2/FLASH. Interacts with NFATC2IP; the interaction may repress IL-4 production in T cells. Interacts with kinase CDK9. Interacts with sphingosine kinase 1 SPHK1. Interacts with kinase TNIK. Interacts with TRAFD1. Interacts with DNA phosphodiesterase TDP2. Interacts with MAVS/IPS1. Interacts with CARD14. Interacts with Epstein-Barr virus LMP1/BNFL1. Interacts with GPS2. Interacts with XPNPEP3. Interacts with RIPK3. Interacts with RELL2. Interacts with LRRC19. Interacts with GAPDH; promoting TRAF2 ubiquitination. Phosphorylated at several serine residues within the first 128 amino acid residues. Phosphorylated at Thr-117 in response to signaling via TNF and TNFRSF1A. Phosphorylation at Thr-117 is required for 'Lys-63'-linked polyubiquitination, but not for 'Lys-48'-linked polyubiquitination. Phosphorylation at Thr-117 is important for interaction with IKKA and IKKB, activation of IKK and subsequent activation of NF-kappa-B. Post-translationally, undergoes both 'Lys-48'-linked and 'Lys-63'-linked polyubiquitination. Polyubiquitinated via 'Lys-63'-linked ubiquitin in response to TNF signaling; this requires prior phosphorylation at Thr-117. 'Lys-63'-linked polyubiquitination promotes TRAF2-mediated activation of NF-kappa-B. Can be polyubiquitinated at several Lys residues via 'Lys-48'-linked ubiquitin chains in response to TNF signaling, leading to proteasomal degradation. Autoubiquitinated, leading to its subsequent proteasomal degradation. Polyubiquitinated by BIRC2 and SIAH2, leading to its subsequent proteasomal degradation. Deubiquitinated by CYLD, a protease that specifically cleaves 'Lys-63'-linked polyubiquitin chains. Ubiquination is inhibited by LRRC19; inhibits proteasomal degradation. Ubiquitinated at Lys-320 by the SCF(FBXL2) complex, leading to its degradation by the proteasome. Ubiquitinated by E3 ubiquitin-protein ligase complex containing FBXO7; leading to repression of NF-kappa-B signaling.

The protein resides in the cytoplasm. The catalysed reaction is S-ubiquitinyl-[E2 ubiquitin-conjugating enzyme]-L-cysteine + [acceptor protein]-L-lysine = [E2 ubiquitin-conjugating enzyme]-L-cysteine + N(6)-ubiquitinyl-[acceptor protein]-L-lysine.. Its pathway is protein modification; protein ubiquitination. Its activity is regulated as follows. Has very low E3 ubiquitin ligase activity in the absence of sphingosine-1-phosphate. E3 ubiquitin ligase activity is strongly activated by cytoplasmic sphingosine-1-phosphate. E3 ubiquitin-protein ligase that regulates activation of NF-kappa-B and JNK and plays a central role in the regulation of cell survival and apoptosis. Catalyzes 'Lys-63'-linked ubiquitination of target proteins, such as BIRC3, IKBKE, MLST8, RIPK1 and TICAM1. Is an essential constituent of several E3 ubiquitin-protein ligase complexes, where it promotes the ubiquitination of target proteins by bringing them into contact with other E3 ubiquitin ligases. Regulates BIRC2 and BIRC3 protein levels by inhibiting their autoubiquitination and subsequent degradation; this does not depend on the TRAF2 RING-type zinc finger domain. Plays a role in mediating activation of NF-kappa-B by EIF2AK2/PKR. In complex with BIRC2 or BIRC3, promotes ubiquitination of IKBKE. Acts as a regulator of mTORC1 and mTORC2 assembly by mediating 'Lys-63'-linked ubiquitination of MLST8, thereby inhibiting formation of the mTORC2 complex, while facilitating assembly of the mTORC1 complex. Required for normal antibody isotype switching from IgM to IgG. The chain is TNF receptor-associated factor 2 from Homo sapiens (Human).